The chain runs to 471 residues: Argininosuccinate lyase (471 aa).

This sequence belongs to the lyase 1 family. Argininosuccinate lyase subfamily.

The protein localises to the cytoplasm. The catalysed reaction is 2-(N(omega)-L-arginino)succinate = fumarate + L-arginine. It participates in amino-acid biosynthesis; L-arginine biosynthesis; L-arginine from L-ornithine and carbamoyl phosphate: step 3/3. The chain is Argininosuccinate lyase from Ralstonia nicotianae (strain ATCC BAA-1114 / GMI1000) (Ralstonia solanacearum).